The chain runs to 356 residues: tRNA N6-adenosine threonylcarbamoyltransferase (356 aa).

Positions 115 and 119 each coordinate Fe cation. Substrate is bound by residues 138–142 (LVSGG), Asp-171, Gly-184, and Asn-283. Residue Asp-311 coordinates Fe cation.

Belongs to the KAE1 / TsaD family. Fe(2+) is required as a cofactor.

It is found in the cytoplasm. It catalyses the reaction L-threonylcarbamoyladenylate + adenosine(37) in tRNA = N(6)-L-threonylcarbamoyladenosine(37) in tRNA + AMP + H(+). Functionally, required for the formation of a threonylcarbamoyl group on adenosine at position 37 (t(6)A37) in tRNAs that read codons beginning with adenine. Is involved in the transfer of the threonylcarbamoyl moiety of threonylcarbamoyl-AMP (TC-AMP) to the N6 group of A37, together with TsaE and TsaB. TsaD likely plays a direct catalytic role in this reaction. The polypeptide is tRNA N6-adenosine threonylcarbamoyltransferase (Prochlorococcus marinus (strain NATL2A)).